The primary structure comprises 419 residues: Subtilisin-like protease 2 (419 aa).

Positions 1–16 (MQLLNFGLLLLPFVAG) are cleaved as a signal peptide. Residues 17–122 (DLAPQPEPLL…VHPDQHVYLA (106 aa)) constitute a propeptide that is removed on maturation. The Inhibitor I9 domain maps to 36 to 122 (QYIVTLKEGL…VHPDQHVYLA (87 aa)). Positions 131 to 419 (RWGLGYMSSK…IQERKFKLPK (289 aa)) constitute a Peptidase S8 domain. Catalysis depends on charge relay system residues Asp169 and His201. N-linked (GlcNAc...) asparagine glycosylation is found at Asn248, Asn261, and Asn348. Ser357 serves as the catalytic Charge relay system. A glycan (N-linked (GlcNAc...) asparagine) is linked at Asn388.

Belongs to the peptidase S8 family.

The protein localises to the secreted. Its function is as follows. Secreted subtilisin-like serine protease with keratinolytic activity that contributes to pathogenicity. The protein is Subtilisin-like protease 2 (SUB2) of Arthroderma benhamiae (Trichophyton mentagrophytes).